The chain runs to 962 residues: Leucine--tRNA ligase (962 aa).

Residues 68–79 (PYPSGAGLHVGH) carry the 'HIGH' region motif. The disordered stretch occupies residues 559–582 (DYSPRTFDPDDANTSPETPLSRNE). Polar residues predominate over residues 570-579 (ANTSPETPLS). The short motif at 733 to 737 (KMGKS) is the 'KMSKS' region element. K736 contributes to the ATP binding site.

This sequence belongs to the class-I aminoacyl-tRNA synthetase family.

The protein localises to the cytoplasm. The enzyme catalyses tRNA(Leu) + L-leucine + ATP = L-leucyl-tRNA(Leu) + AMP + diphosphate. The protein is Leucine--tRNA ligase of Streptomyces avermitilis (strain ATCC 31267 / DSM 46492 / JCM 5070 / NBRC 14893 / NCIMB 12804 / NRRL 8165 / MA-4680).